A 425-amino-acid polypeptide reads, in one-letter code: AP-3 complex subunit mu (425 aa).

The 249-residue stretch at 175–423 (TNEFFIHVLE…TIIAQNVSFR (249 aa)) folds into the MHD domain.

Belongs to the adaptor complexes medium subunit family.

The protein resides in the cytoplasm. Its subcellular location is the cytoskeleton. It localises to the microtubule organizing center. It is found in the spindle pole body. The protein localises to the membrane. The protein resides in the golgi apparatus. Its subcellular location is the cytoplasmic vesicle membrane. Its function is as follows. Part of the AP-3 complex, an adaptor-related complex which is not clathrin-associated. The complex is associated with the Golgi region as well as more peripheral structures. It facilitates the budding of vesicles from the Golgi membrane and may be directly involved in trafficking to the vacuole. This Schizosaccharomyces pombe (strain 972 / ATCC 24843) (Fission yeast) protein is AP-3 complex subunit mu (apm3).